The sequence spans 156 residues: Small ribosomal subunit protein uS7 (156 aa).

The protein belongs to the universal ribosomal protein uS7 family. In terms of assembly, part of the 30S ribosomal subunit. Contacts proteins S9 and S11.

Its function is as follows. One of the primary rRNA binding proteins, it binds directly to 16S rRNA where it nucleates assembly of the head domain of the 30S subunit. Is located at the subunit interface close to the decoding center, probably blocks exit of the E-site tRNA. In Parvibaculum lavamentivorans (strain DS-1 / DSM 13023 / NCIMB 13966), this protein is Small ribosomal subunit protein uS7.